The following is a 124-amino-acid chain: UPF0102 protein HCH_05895 (124 aa).

This sequence belongs to the UPF0102 family.

This Hahella chejuensis (strain KCTC 2396) protein is UPF0102 protein HCH_05895.